We begin with the raw amino-acid sequence, 282 residues long: tRNA (guanine-N(7)-)-methyltransferase (282 aa).

The segment at 1–31 (MSLTDDQASKRQAYRAAKEANRKELKHVKID) is disordered. Basic and acidic residues predominate over residues 16–31 (AAKEANRKELKHVKID). Residues Gly99, 122-123 (EI), 157-158 (NA), and Cys177 each bind S-adenosyl-L-methionine. Residue Asp180 is part of the active site. Residue 255–257 (TEE) coordinates S-adenosyl-L-methionine.

It belongs to the class I-like SAM-binding methyltransferase superfamily. TrmB family. As to quaternary structure, forms a complex with TRM82.

It localises to the nucleus. It carries out the reaction guanosine(46) in tRNA + S-adenosyl-L-methionine = N(7)-methylguanosine(46) in tRNA + S-adenosyl-L-homocysteine. It functions in the pathway tRNA modification; N(7)-methylguanine-tRNA biosynthesis. Catalyzes the formation of N(7)-methylguanine at position 46 (m7G46) in tRNA. The chain is tRNA (guanine-N(7)-)-methyltransferase from Eremothecium gossypii (strain ATCC 10895 / CBS 109.51 / FGSC 9923 / NRRL Y-1056) (Yeast).